Here is a 92-residue protein sequence, read N- to C-terminus: Endoribonuclease VapD homolog (92 aa).

The protein belongs to the VapD ribonuclease family. As to quaternary structure, homodimer.

Cleaves ssRNA, mostly between U:A. This is Endoribonuclease VapD homolog from Neisseria gonorrhoeae.